Reading from the N-terminus, the 862-residue chain is Leucine--tRNA ligase (862 aa).

The 'HIGH' region signature appears at 42–52; the sequence is PYPSGKIHIGH. Positions 614–618 match the 'KMSKS' region motif; the sequence is KMSKS. K617 contributes to the ATP binding site.

This sequence belongs to the class-I aminoacyl-tRNA synthetase family.

The protein resides in the cytoplasm. It catalyses the reaction tRNA(Leu) + L-leucine + ATP = L-leucyl-tRNA(Leu) + AMP + diphosphate. This is Leucine--tRNA ligase from Syntrophus aciditrophicus (strain SB).